The following is a 280-amino-acid chain: Probable S-methyl-5'-thioinosine phosphorylase (280 aa).

Residues Thr-8 and 50 to 51 (RH) contribute to the phosphate site. A substrate-binding site is contributed by Met-175. Position 176 (Thr-176) interacts with phosphate. 199–201 (NYA) serves as a coordination point for substrate.

This sequence belongs to the PNP/MTAP phosphorylase family. MTAP subfamily. As to quaternary structure, homotrimer.

It carries out the reaction S-methyl-5'-thioinosine + phosphate = 5-(methylsulfanyl)-alpha-D-ribose 1-phosphate + hypoxanthine. The protein operates within purine metabolism; purine nucleoside salvage. Its function is as follows. Catalyzes the reversible phosphorylation of S-methyl-5'-thioinosine (MTI) to hypoxanthine and 5-methylthioribose-1-phosphate. Involved in the breakdown of S-methyl-5'-thioadenosine (MTA), a major by-product of polyamine biosynthesis. Catabolism of (MTA) occurs via deamination to MTI and phosphorolysis to hypoxanthine. This Methanothermobacter thermautotrophicus (strain ATCC 29096 / DSM 1053 / JCM 10044 / NBRC 100330 / Delta H) (Methanobacterium thermoautotrophicum) protein is Probable S-methyl-5'-thioinosine phosphorylase.